The sequence spans 144 residues: MESPLGSDLSRLVRIWRALIDHRLKPLELTQTHWITLHNICQLPPEQSQIQLAKAIGIEQPSLVRTLDQLEEKGLITRHTCSNDRRAKRIKLTKSAEPIIQKVNNVIHTTREEILNGINQEEIQWLSQMISKLEKNILELYNKS.

One can recognise an HTH marR-type domain in the interval 2–135 (ESPLGSDLSR…LSQMISKLEK (134 aa)). Residues 49 to 72 (QIQLAKAIGIEQPSLVRTLDQLEE) constitute a DNA-binding region (H-T-H motif).

It belongs to the SlyA family. As to quaternary structure, homodimer.

Transcription regulator that can specifically activate or repress expression of target genes. This chain is Transcriptional regulator SlyA, found in Wigglesworthia glossinidia brevipalpis.